A 267-amino-acid polypeptide reads, in one-letter code: Orotidine 5'-phosphate decarboxylase (267 aa).

Residues aspartate 37, 59-61 (KTH), 91-100 (DRKFADIGNT), tyrosine 217, and arginine 235 each bind substrate. The active-site Proton donor is lysine 93.

This sequence belongs to the OMP decarboxylase family.

The catalysed reaction is orotidine 5'-phosphate + H(+) = UMP + CO2. It participates in pyrimidine metabolism; UMP biosynthesis via de novo pathway; UMP from orotate: step 2/2. This chain is Orotidine 5'-phosphate decarboxylase (URA3), found in Kluyveromyces marxianus (Yeast).